The sequence spans 116 residues: WRMVWEQNVSTVIMATNTEERKEPKCAKYWPSGDPQSYGDLMVVNLGENHLVDYTIRSFSVQRAQGDSTMSIKRNITQYHFTSWPDFGVPKSPSGILKFLRKIKHSSPTGYGPIVV.

The Tyrosine-protein phosphatase domain maps to 1–116 (WRMVWEQNVS…SPTGYGPIVV (116 aa)). Substrate is bound at residue D86.

The protein belongs to the protein-tyrosine phosphatase family.

It carries out the reaction O-phospho-L-tyrosyl-[protein] + H2O = L-tyrosyl-[protein] + phosphate. This is Tyrosine-protein phosphatase 10 (STY-10) from Styela plicata (Wrinkled sea squirt).